The chain runs to 317 residues: Peroxidase 22.3 (317 aa).

The first 25 residues, 1–25 (MASATNSSLSLMLLVAAAMASVASA), serve as a signal peptide directing secretion. Q26 is subject to Pyrrolidone carboxylic acid. 2 disulfides stabilise this stretch: C36/C111 and C69/C74. H67 (proton acceptor) is an active-site residue. Residues D68, V71, G73, D75, and S77 each coordinate Ca(2+). Residue N112 is glycosylated (N-linked (GlcNAc...) asparagine). Cystine bridges form between C117-C312 and C196-C221. P159 is a substrate binding site. Residue N171 is glycosylated (N-linked (GlcNAc...) asparagine). Residue H189 coordinates heme b. T190 provides a ligand contact to Ca(2+). N-linked (GlcNAc...) asparagine glycosylation occurs at N205. The Ca(2+) site is built by D236, T239, and D244.

This sequence belongs to the peroxidase family. Classical plant (class III) peroxidase subfamily. Heme b is required as a cofactor. The cofactor is Ca(2+).

It is found in the secreted. The enzyme catalyses H2O2 + AH2 = A + 2 H2O. In terms of biological role, removal of H(2)O(2), oxidation of toxic reductants, biosynthesis and degradation of lignin, suberization, auxin catabolism, response to environmental stresses such as wounding, pathogen attack and oxidative stress. These functions might be dependent on each isozyme/isoform in each plant tissue. This is Peroxidase 22.3 from Oryza sativa subsp. japonica (Rice).